The primary structure comprises 139 residues: Iron-sulfur cluster assembly 1 homolog, mitochondrial (139 aa).

Residues Cys-52, Cys-117, and Cys-119 each coordinate Fe cation.

Belongs to the HesB/IscA family.

The protein localises to the mitochondrion. Involved in the assembly of mitochondrial iron-sulfur proteins. Probably involved in the binding of an intermediate of Fe/S cluster assembly. The polypeptide is Iron-sulfur cluster assembly 1 homolog, mitochondrial (isca1) (Dictyostelium discoideum (Social amoeba)).